Reading from the N-terminus, the 365-residue chain is tRNA(Met) cytidine acetate ligase (365 aa).

Residues 7 to 20 (IAEF…HKYL), G96, N152, and R175 contribute to the ATP site.

It belongs to the TmcAL family.

It localises to the cytoplasm. The catalysed reaction is cytidine(34) in elongator tRNA(Met) + acetate + ATP = N(4)-acetylcytidine(34) in elongator tRNA(Met) + AMP + diphosphate. Its function is as follows. Catalyzes the formation of N(4)-acetylcytidine (ac(4)C) at the wobble position of elongator tRNA(Met), using acetate and ATP as substrates. First activates an acetate ion to form acetyladenylate (Ac-AMP) and then transfers the acetyl group to tRNA to form ac(4)C34. This chain is tRNA(Met) cytidine acetate ligase, found in Streptococcus pneumoniae serotype 19F (strain G54).